The sequence spans 75 residues: Protein P8 (75 aa).

A disordered region spans residues 19 to 47 (PMGGMPSIASSSSAETGQQTQSGNFTGGG). The span at 26-39 (IASSSSAETGQQTQ) shows a compositional bias: polar residues. A helical membrane pass occupies residues 55-72 (NNQLLIVGAVVIGLFLVI).

The protein localises to the virion membrane. The chain is Protein P8 (VIII) from Pseudoalteromonas phage PM2 (Bacteriophage PM2).